The primary structure comprises 230 residues: N-(5'-phosphoribosyl)anthranilate isomerase (230 aa).

It belongs to the TrpF family.

The enzyme catalyses N-(5-phospho-beta-D-ribosyl)anthranilate = 1-(2-carboxyphenylamino)-1-deoxy-D-ribulose 5-phosphate. The protein operates within amino-acid biosynthesis; L-tryptophan biosynthesis; L-tryptophan from chorismate: step 3/5. This chain is N-(5'-phosphoribosyl)anthranilate isomerase, found in Thermosynechococcus vestitus (strain NIES-2133 / IAM M-273 / BP-1).